Reading from the N-terminus, the 597-residue chain is MRISGVTLFRVSSQLRNVVNGQWTTTHYTVKDRSTDPRWKDVDLARESDVYDVVIVGGGPSGLSAAIRLRQLAEKAQKELRVCVVEKASVIGGHTLSGAVIETRALDELIPNWKELGAPVYQQVTSESIAILTESGRIPVPVLPGVPLANHGNYIVRLGKVVQWLGEQAEAAGVEVWPEIAASEVLYNEDGSVKGIATSDVGIGKDGAPKDGFARGMEFHAKCTIFAEGCRGHLSKQVLDKFDLRTHAMTYGIGLKELWEIDPAKHRPGYVEHTMGWPLNVDQYGGSFLYHIEDQGQPLVSVGFVVALDYANPNLNPYKEFQKYKTHPSISKQLEGGKRIGYGARALNEGGFQSIPKLHFPGGCLVGCSAGFLNVAKLKGTHNAMKSGMVAAESIFEDIQQKGEDVQTIDPATYDKNIRDTYVVKELKATRNIRPSFNTSLGYIGGLIYSGIFYVFGRGIEPWTLGHGKKDNEKLIPVKDAKEIDYPKPDGKLTFDLLTSVSLTGTNHTEDQPAHLTLKNDQVPLDVNLAVYGGPEARFCPAGVYEFVPSEADESKKRLQINAQNCIHCKTCDIKDPQQNINWVTPEGGGGPKYEGM.

Position 53 to 67 (53 to 67 (VVIVGGGPSGLSAAI)) interacts with FAD. The stretch at 91 to 112 (IGGHTLSGAVIETRALDELIPN) is an intramembrane region. Residues Gly-285 and Gly-286 each coordinate a ubiquinone. The stretch at 409–426 (IDPATYDKNIRDTYVVKE) is an intramembrane region. 4 residues coordinate [4Fe-4S] cluster: Cys-540, Cys-566, Cys-569, and Cys-572. Residues 557–586 (KRLQINAQNCIHCKTCDIKDPQQNINWVTP) enclose the 4Fe-4S ferredoxin-type domain.

It belongs to the ETF-QO/FixC family. Monomer. [4Fe-4S] cluster serves as cofactor. Requires FAD as cofactor.

It is found in the mitochondrion inner membrane. It carries out the reaction a ubiquinone + reduced [electron-transfer flavoprotein] = a ubiquinol + oxidized [electron-transfer flavoprotein] + H(+). Accepts electrons from ETF and reduces ubiquinone. The sequence is that of Electron transfer flavoprotein-ubiquinone oxidoreductase, mitochondrial (let-721) from Caenorhabditis elegans.